The primary structure comprises 443 residues: MESLASLYKNHIATLQERTRDALARFKLDALLIHSGELFNVFLDDHPYPFKVNPQFKAWVPVTQVPNCWLLVDGVNKPKLWFYLPVDYWHNVEPLPTSFWTEDVEVIALPKADGIGSLLPAARGNIGYIGPVPERALQLGIEASNINPKGVIDYLHYYRSFKTEYELACMREAQKMAVNGHRAAEEAFRSGMSEFDINIAYLTATGHRDTDVPYSNIVALNEHAAVLHYTKLDHQAPEEMRSFLLDAGAEYNGYAADLTRTWSAKSDNDYAQLVKDVNDEQLALIATMKAGVSYVDYHIQFHQRIAKLLRKHQIITDMSEEAMVENDLTGPFMPHGIGHPLGLQVHDVAGFMQDDSGTHLAAPAKYPYLRYTRILQPGMVLTIEPGIYFIESLLAPWREGQFSKHFNWQKIEALKPFGGIRIEDNVVIHENNVENMTRDLKLA.

Residues aspartate 246, aspartate 257, histidine 339, glutamate 384, and glutamate 423 each coordinate Mn(2+).

The protein belongs to the peptidase M24B family. Bacterial-type prolidase subfamily. Mn(2+) is required as a cofactor.

The enzyme catalyses Xaa-L-Pro dipeptide + H2O = an L-alpha-amino acid + L-proline. In terms of biological role, splits dipeptides with a prolyl residue in the C-terminal position. The chain is Xaa-Pro dipeptidase from Shigella flexneri.